The primary structure comprises 186 residues: RIO-type serine/threonine-protein kinase Rio1 (186 aa).

Residue Lys15 coordinates ATP. Asp124 acts as the Proton acceptor in catalysis. Residues Asn129 and Asp140 each coordinate Mg(2+). Asp140 (4-aspartylphosphate intermediate) is an active-site residue.

Belongs to the protein kinase superfamily. RIO-type Ser/Thr kinase family.

It carries out the reaction L-seryl-[protein] + ATP = O-phospho-L-seryl-[protein] + ADP + H(+). The enzyme catalyses L-threonyl-[protein] + ATP = O-phospho-L-threonyl-[protein] + ADP + H(+). It catalyses the reaction ATP + H2O = ADP + phosphate + H(+). In terms of biological role, despite the protein kinase domain is proposed to act predominantly as an ATPase. This chain is RIO-type serine/threonine-protein kinase Rio1 (rio1), found in Thermoplasma acidophilum (strain ATCC 25905 / DSM 1728 / JCM 9062 / NBRC 15155 / AMRC-C165).